The chain runs to 406 residues: Tryptophan synthase beta chain (406 aa).

K95 carries the post-translational modification N6-(pyridoxal phosphate)lysine.

Belongs to the TrpB family. In terms of assembly, tetramer of two alpha and two beta chains. Requires pyridoxal 5'-phosphate as cofactor.

The catalysed reaction is (1S,2R)-1-C-(indol-3-yl)glycerol 3-phosphate + L-serine = D-glyceraldehyde 3-phosphate + L-tryptophan + H2O. It participates in amino-acid biosynthesis; L-tryptophan biosynthesis; L-tryptophan from chorismate: step 5/5. Functionally, the beta subunit is responsible for the synthesis of L-tryptophan from indole and L-serine. The sequence is that of Tryptophan synthase beta chain from Azotobacter vinelandii (strain DJ / ATCC BAA-1303).